A 908-amino-acid polypeptide reads, in one-letter code: DNA (cytosine-5)-methyltransferase 3A (908 aa).

Residues 1–13 show a composition bias toward polar residues; the sequence is MPSSGPGDTSISS. Disordered regions lie at residues 1-183 and 226-281; these read MPSS…PMPR and SQAS…PEYE. The span at 14–37 shows a compositional bias: basic and acidic residues; the sequence is LEREDDRKEGEEQEENRGKEERQE. A compositionally biased stretch (basic residues) spans 44–54; the sequence is KVGRPGRKRKH. Over residues 69–80 the composition is skewed to polar residues; sequence TTKSQPTAQDSG. At serine 102 the chain carries Phosphoserine. Over residues 110–124 the composition is skewed to low complexity; it reads GAPAEGEGTETPPEA. Threonine 120 is subject to Phosphothreonine. Lysine 158 is covalently cross-linked (Glycyl lysine isopeptide (Lys-Gly) (interchain with G-Cter in SUMO2)). Arginine 167 is modified (omega-N-methylarginine). Residues 195 to 399 are interaction with DNMT1 and DNMT3B; that stretch reads SKRKRDEWLA…DTGKAVEVQN (205 aa). A phosphoserine mark is found at serine 239 and serine 251. Over residues 242–256 the composition is skewed to polar residues; sequence AVQQPTDPASPTVAT. Threonine 257 is subject to Phosphothreonine. One can recognise a PWWP domain in the interval 257 to 315; sequence TPEPVGADAGDKNATKAADDEPEYEDGRGFGIGELVWGKLRGFSWWPGRIVSWWMTGRS. A compositionally biased stretch (basic and acidic residues) spans 265–275; the sequence is AGDKNATKAAD. 2 positions are modified to phosphoserine: serine 386 and serine 389. The interval 443-462 is disordered; the sequence is AYAPPPPAKKPRKSTTEKPK. The region spanning 478–610 is the ADD domain; the sequence is EVRQKCRNIE…LQMFFANNHD (133 aa). The GATA-type; atypical zinc finger occupies 489-519; the sequence is ICISCGSLNVTLEHPLFIGGMCQNCKNCFLE. An interaction with the PRC2/EED-EZH2 complex region spans residues 490-582; sequence CISCGSLNVT…KEDPWNCYMC (93 aa). A PHD-type; atypical zinc finger spans residues 530 to 586; that stretch reads QSYCTICCGGREVLMCGNNNCCRCFCVECVDLLVGPGAAQAAIKEDPWNCYMCGHKG. An SAM-dependent MTase C5-type domain is found at 630–908; sequence IRVLSLFDGI…APLKEYFACV (279 aa). S-adenosyl-L-methionine is bound by residues 637-641, glutamate 660, and 682-684; these read DGIAT and DVR. Residue cysteine 706 is part of the active site. Position 706 is an S-methylcysteine; by autocatalysis (cysteine 706). 887–889 contributes to the S-adenosyl-L-methionine binding site; it reads RSW.

Belongs to the class I-like SAM-binding methyltransferase superfamily. C5-methyltransferase family. In terms of assembly, heterotetramer composed of 1 DNMT3A homodimer and 2 DNMT3L subunits (DNMT3L-DNMT3A-DNMT3A-DNMT3L). Interacts with DNMT1 and DNMT3B. Interacts with MPHOSPH8. Interacts with histone H3 that is not methylated at 'Lys-4' (H3K4). Binds the ZBTB18 transcriptional repressor. Interacts with SETDB1. Associates with HDAC1 through its ADD domain. Interacts with UHRF1. Interacts with the PRC2/EED-EZH2 complex. Interacts with UBC9, PIAS1 and PIAS2. Interacts with SPOCD1. Interacts with ZNF263; recruited to the SIX3 promoter along with other proteins involved in chromatin modification and transcriptional corepression where it contributes to transcriptional repression. Post-translationally, sumoylated; sumoylation disrupts the ability to interact with histone deacetylases (HDAC1 and HDAC2) and repress transcription. Auto-methylated at Cys-706: auto-methylation takes place in absence of DNA substrate and inactivates the DNA methyltransferase activity. Inactivation by auto-methylation may be used to inactivate unused DNA methyltransferases in the cell.

It is found in the nucleus. It localises to the chromosome. Its subcellular location is the cytoplasm. The catalysed reaction is a 2'-deoxycytidine in DNA + S-adenosyl-L-methionine = a 5-methyl-2'-deoxycytidine in DNA + S-adenosyl-L-homocysteine + H(+). It catalyses the reaction L-cysteinyl-[protein] + S-adenosyl-L-methionine = S-methyl-L-cysteinyl-[protein] + S-adenosyl-L-homocysteine + H(+). With respect to regulation, activated by binding to the regulatory factor DNMT3L. Auto-methylation at Cys-706 in absence of DNA inactivates the DNA methyltransferase activity. Required for genome-wide de novo methylation and is essential for the establishment of DNA methylation patterns during development. DNA methylation is coordinated with methylation of histones. It modifies DNA in a non-processive manner and also methylates non-CpG sites. May preferentially methylate DNA linker between 2 nucleosomal cores and is inhibited by histone H1. Plays a role in paternal and maternal imprinting. Required for methylation of most imprinted loci in germ cells. Acts as a transcriptional corepressor for ZBTB18. Recruited to trimethylated 'Lys-36' of histone H3 (H3K36me3) sites. Can actively repress transcription through the recruitment of HDAC activity. Also has weak auto-methylation activity on Cys-706 in absence of DNA. The polypeptide is DNA (cytosine-5)-methyltransferase 3A (Dnmt3a) (Rattus norvegicus (Rat)).